A 470-amino-acid polypeptide reads, in one-letter code: Transcription factor SOX-8 (470 aa).

The span at 1-12 shows a compositional bias: basic and acidic residues; that stretch reads MLNMTEEHDKAL. Residues 1–60 form a disordered region; sequence MLNMTEEHDKALEAPCSPAGTTSSMSHVDSDSDSPLSPAGSEGLGCAPAPAPRPPGAAPL. A dimerization (DIM) region spans residues 67–107; it reads AEVDERFPACIRDAVSQVLKGYDWSLVPMPVRGNGSLKAKP. Residues 109-177 constitute a DNA-binding region (HMG box); the sequence is VKRPMNAFMV…QHKKDHPDYK (69 aa). Basic and acidic residues-rich tracts occupy residues 163–178, 219–228, and 242–257; these read ERLR…DYKY, DGHHHGEHAG, and TDLH…HEGR. Disordered stretches follow at residues 163-257 and 327-381; these read ERLR…HEGR and AGGA…DYGS. Positions 233-308 are transactivation domain (TAM); that stretch reads PPTPPTTPKT…LNGHTAMPAD (76 aa). The segment covering 338 to 349 has biased composition (low complexity); sequence SPASASPSSADS. The transactivation domain (TAC) stretch occupies residues 353–470; sequence RPHIKTEQLS…QPVYTTLTRP (118 aa). Residues 359 to 372 show a composition bias toward polar residues; the sequence is EQLSPSHYSDQSHG. The 9aaTAD motif lies at 424 to 432; sequence SSIYQYPYF.

Widely expressed in the embryo.

The protein localises to the nucleus. Its function is as follows. Transcription factor that may play a role in central nervous system, limb and facial development. May be involved in male sex determination. Binds the consensus motif 5'-[AT][AT]CAA[AT]G-3'. In Gallus gallus (Chicken), this protein is Transcription factor SOX-8 (SOX8).